Consider the following 65-residue polypeptide: Large ribosomal subunit protein uL30 (65 aa).

The protein belongs to the universal ribosomal protein uL30 family. Part of the 50S ribosomal subunit.

In Chloroflexus aurantiacus (strain ATCC 29366 / DSM 635 / J-10-fl), this protein is Large ribosomal subunit protein uL30.